Consider the following 55-residue polypeptide: Mitochondrial import receptor subunit TOM7 homolog (55 aa).

At 1–20 (MVKLSKEAKQRLQQLFKGSQ) the chain is on the cytoplasmic side. The helical transmembrane segment at 21-36 (FAIRWGFIPLVIYLGF) threads the bilayer. Topologically, residues 37-55 (KRGADPGMPEPTVLSLLWG) are mitochondrial intermembrane.

The protein belongs to the Tom7 family. Forms part of the preprotein translocase complex of the outer mitochondrial membrane (TOM complex) which consists of at least 7 different proteins (TOMM5, TOMM6, TOMM7, TOMM20, TOMM22, TOMM40 and TOMM70).

Its subcellular location is the mitochondrion outer membrane. Functionally, required for assembly and stability of the TOM complex. Positive regulator of PRKN translocation to damaged mitochondria. Acts probably by stabilizing PINK1 on the outer membrane of depolarized mitochondria. The sequence is that of Mitochondrial import receptor subunit TOM7 homolog (TOMM7) from Homo sapiens (Human).